A 297-amino-acid chain; its full sequence is Phosphatidylglycerol--prolipoprotein diacylglyceryl transferase (297 aa).

A run of 4 helical transmembrane segments spans residues 20–40, 58–78, 104–124, and 133–153; these read FLTIRWYGLLISISVVIGLFI, ILPSLIISSIIGARAYYVIFE, IAIWQGGIAIHGGLIGGFLCI, and IHLKTFIDILIPSIILGQSIG. Position 154 (Arg154) interacts with a 1,2-diacyl-sn-glycero-3-phospho-(1'-sn-glycerol). Transmembrane regions (helical) follow at residues 194–214, 225–245, and 266–286; these read TFIYESLWNFLIFILLITIFY, GFISCLYLIGYSFGRFWIEGL, and AQFISIFLFSSGLIGLFFLRL.

This sequence belongs to the Lgt family.

It localises to the cell inner membrane. The enzyme catalyses L-cysteinyl-[prolipoprotein] + a 1,2-diacyl-sn-glycero-3-phospho-(1'-sn-glycerol) = an S-1,2-diacyl-sn-glyceryl-L-cysteinyl-[prolipoprotein] + sn-glycerol 1-phosphate + H(+). Its pathway is protein modification; lipoprotein biosynthesis (diacylglyceryl transfer). In terms of biological role, catalyzes the transfer of the diacylglyceryl group from phosphatidylglycerol to the sulfhydryl group of the N-terminal cysteine of a prolipoprotein, the first step in the formation of mature lipoproteins. In Prochlorococcus marinus subsp. pastoris (strain CCMP1986 / NIES-2087 / MED4), this protein is Phosphatidylglycerol--prolipoprotein diacylglyceryl transferase.